The chain runs to 184 residues: Non-fimbrial adhesin 1 (184 aa).

Residues 1-28 (MKAKKYENQIYNENGRRCQRHGRRLAIA) form the signal peptide. A disulfide bridge links C57 with C91.

Forms a polymeric structure, which disintegrates with elevated temperature into a monomer but with some relatively stable dimers.

The protein is Non-fimbrial adhesin 1 (nfaA) of Escherichia coli.